Consider the following 797-residue polypeptide: Protocadherin beta-9 (797 aa).

The N-terminal stretch at 1 to 26 is a signal peptide; it reads MKTRGFSFPRQRQVLFLFLFWGVSLA. Residues 27-690 lie on the Extracellular side of the membrane; it reads GSGFGRYSVT…AQADSLTVYL (664 aa). 5 consecutive Cadherin domains span residues 35–133, 138–242, 247–347, 352–451, and 456–561; these read VTEE…SPVF, MVLK…APQF, YETQ…PPEL, LSNS…APAF, and YTLF…SPFV. N-linked (GlcNAc...) asparagine glycosylation is present at Asn169. A glycan (N-linked (GlcNAc...) asparagine) is linked at Asn418. The N-linked (GlcNAc...) asparagine glycan is linked to Asn567. Residues 568 to 671 form the Cadherin 6 domain; sequence GSAPCTELVP…LVDGFSQPYL (104 aa). A helical membrane pass occupies residues 691–711; sequence VVALASVSSLFLLSVLLFVAV. At 712–797 the chain is on the cytoplasmic side; the sequence is RLCRRSRAAS…TLHNSFGFNY (86 aa).

The protein localises to the cell membrane. Its function is as follows. Potential calcium-dependent cell-adhesion protein. May be involved in the establishment and maintenance of specific neuronal connections in the brain. This chain is Protocadherin beta-9 (PCDHB9), found in Pan troglodytes (Chimpanzee).